The chain runs to 294 residues: Pyridoxal 5'-phosphate synthase subunit PdxS (294 aa).

Position 24 (Asp24) interacts with D-ribose 5-phosphate. Lys81 acts as the Schiff-base intermediate with D-ribose 5-phosphate in catalysis. Gly153 contacts D-ribose 5-phosphate. Residue Arg165 participates in D-glyceraldehyde 3-phosphate binding. D-ribose 5-phosphate contacts are provided by residues Gly214 and 235–236 (GS).

This sequence belongs to the PdxS/SNZ family. In terms of assembly, in the presence of PdxT, forms a dodecamer of heterodimers.

The catalysed reaction is aldehydo-D-ribose 5-phosphate + D-glyceraldehyde 3-phosphate + L-glutamine = pyridoxal 5'-phosphate + L-glutamate + phosphate + 3 H2O + H(+). It functions in the pathway cofactor biosynthesis; pyridoxal 5'-phosphate biosynthesis. Catalyzes the formation of pyridoxal 5'-phosphate from ribose 5-phosphate (RBP), glyceraldehyde 3-phosphate (G3P) and ammonia. The ammonia is provided by the PdxT subunit. Can also use ribulose 5-phosphate and dihydroxyacetone phosphate as substrates, resulting from enzyme-catalyzed isomerization of RBP and G3P, respectively. The polypeptide is Pyridoxal 5'-phosphate synthase subunit PdxS (Bacillus pumilus (strain SAFR-032)).